The primary structure comprises 500 residues: Na(+)/H(+) antiporter NhaB (500 aa).

A run of 11 helical transmembrane segments spans residues 13–33 (FLGA…IINP), 34–54 (IAVV…EFIF), 62–82 (CYPL…GLTS), 97–117 (ILLL…LLFI), 129–149 (IVIS…LDAL), 242–262 (FLYV…TVVI), 306–326 (GIVA…VGLV), 350–370 (FEEA…VSVI), 392–412 (PIMF…VFVA), 449–469 (VATP…IAPL), and 477–497 (MVWM…LCVT).

It belongs to the NhaB Na(+)/H(+) (TC 2.A.34) antiporter family.

Its subcellular location is the cell inner membrane. The catalysed reaction is 2 Na(+)(in) + 3 H(+)(out) = 2 Na(+)(out) + 3 H(+)(in). Functionally, na(+)/H(+) antiporter that extrudes sodium in exchange for external protons. This Marinomonas sp. (strain MWYL1) protein is Na(+)/H(+) antiporter NhaB.